The chain runs to 30 residues: Arsenate respiratory reductase iron-sulfur subunit ArrB (30 aa).

C12, C15, C18, and C22 together coordinate [4Fe-4S] cluster.

In terms of assembly, heterodimer composed of one large subunit (ArrA) and one small subunit (ArrB). It depends on [4Fe-4S] cluster as a cofactor.

The protein resides in the periplasm. Component of the arsenate respiratory reductase (Arr) complex, which catalyzes the reduction of arsenate (As(V)) to arsenite (As(III)). ArrB is probably the electron transfer subunit. This is Arsenate respiratory reductase iron-sulfur subunit ArrB from Chrysiogenes arsenatis.